Reading from the N-terminus, the 1712-residue chain is Neurexin-2 (1712 aa).

An N-terminal signal peptide occupies residues 1 to 28 (MASGSRWRPTPPPLLLLLLLALAARADG). Residues 29–206 (LEFGGGPGQW…LRGATADPLC (178 aa)) form the Laminin G-like 1 domain. Residues 29 to 1636 (LEFGGGPGQW…EVIRESSSTT (1608 aa)) lie on the Extracellular side of the membrane. N-linked (GlcNAc...) asparagine glycosylation is present at N60. Residues 202 to 242 (ADPLCAPARNPCANGGLCTVLAPGEVGCDCSHTGFGGKFCS) enclose the EGF-like 1 domain. 3 cysteine pairs are disulfide-bonded: C206–C219, C213–C229, and C231–C241. 2 consecutive Laminin G-like domains span residues 289–486 (VATF…SFRC) and 493–686 (DPVT…APFC). D335 is a Ca(2+) binding site. A glycan (N-linked (GlcNAc...) asparagine) is linked at N338. Residues L352 and M420 each contribute to the Ca(2+) site. Intrachain disulfides connect C450–C486, C657–C686, C694–C705, C699–C714, and C716–C726. The EGF-like 2 domain occupies 690–727 (TLKQCASAPCRNGGVCREGWNRFICDCIGTGFLGRVCE). Laminin G-like domains follow at residues 732-904 (VLSY…ITYC) and 918-1093 (DPVT…ERGC). Residues D779 and L796 each contribute to the Ca(2+) site. An N-linked (GlcNAc...) asparagine glycan is attached at N841. R854 provides a ligand contact to Ca(2+). 4 disulfide bridges follow: C1065-C1093, C1100-C1111, C1105-C1120, and C1122-C1132. One can recognise an EGF-like 3 domain in the interval 1096-1133 (PSTTCTEESCANQGVCLQQWDGFTCDCTMTSYGGPVCN). The Laminin G-like 6 domain maps to 1137 to 1345 (TTYIFGKGGA…HLRLVGEGPS (209 aa)). Ca(2+) is bound by residues D1189 and V1206. N1236 is a glycosylation site (N-linked (GlcNAc...) asparagine). The Ca(2+) site is built by I1288 and N1290. The segment at 1373-1392 (ATTTTRRGRSPTLRDSTTQN) is disordered. A glycan (O-linked (Xyl...) (heparan sulfate) serine) is linked at S1400. 2 disordered regions span residues 1458–1489 (ATQD…CEEP) and 1525–1626 (TLLS…PGAV). The helical transmembrane segment at 1637 to 1657 (GMVVGIVAAAALCILILLYAM) threads the bilayer. The Cytoplasmic portion of the chain corresponds to 1658–1712 (YKYRNRDEGSYQVDQSRNYISNSAQSNGAVVKEKAPAAPKTPSKAKKNKDKEYYV). The disordered stretch occupies residues 1679–1712 (NSAQSNGAVVKEKAPAAPKTPSKAKKNKDKEYYV).

This sequence belongs to the neurexin family. The laminin G-like domain 1 binds to NXPH1. Interacts with PATJ. Interacts with CBLN1, CBLN2 and, less avidly, with CBLN4. Specific isoforms bind neuroligins NLGN1, NLGN2 and NLGN3. Specific isoforms bind to alpha-dystroglycan. Interacts (via Laminin G-like 1 domain) with IGSF21 (Ig-like 1 domain) in a trans-interaction manner. Interacts with CLSTN3. O-glycosylated; contains heparan sulfate. Heparan sulfate attachment is required for synapse development by mediating interactions with neuroligins. Predominantly expressed in brain.

The protein localises to the presynaptic cell membrane. Functionally, neuronal cell surface protein that may be involved in cell recognition and cell adhesion. May mediate intracellular signaling. In Homo sapiens (Human), this protein is Neurexin-2 (NRXN2).